A 505-amino-acid chain; its full sequence is ATP synthase subunit alpha (505 aa).

Residue 170-177 (GDRQTGKT) coordinates ATP.

Belongs to the ATPase alpha/beta chains family. In terms of assembly, F-type ATPases have 2 components, CF(1) - the catalytic core - and CF(0) - the membrane proton channel. CF(1) has five subunits: alpha(3), beta(3), gamma(1), delta(1), epsilon(1). CF(0) has four main subunits: a(1), b(1), b'(1) and c(9-12).

The protein localises to the cellular thylakoid membrane. The enzyme catalyses ATP + H2O + 4 H(+)(in) = ADP + phosphate + 5 H(+)(out). Its function is as follows. Produces ATP from ADP in the presence of a proton gradient across the membrane. The alpha chain is a regulatory subunit. In Synechococcus sp. (strain ATCC 27144 / PCC 6301 / SAUG 1402/1) (Anacystis nidulans), this protein is ATP synthase subunit alpha.